A 318-amino-acid chain; its full sequence is Methionyl-tRNA formyltransferase (318 aa).

Residue Ser-110–Pro-113 participates in (6S)-5,6,7,8-tetrahydrofolate binding.

The protein belongs to the Fmt family.

The catalysed reaction is L-methionyl-tRNA(fMet) + (6R)-10-formyltetrahydrofolate = N-formyl-L-methionyl-tRNA(fMet) + (6S)-5,6,7,8-tetrahydrofolate + H(+). Functionally, attaches a formyl group to the free amino group of methionyl-tRNA(fMet). The formyl group appears to play a dual role in the initiator identity of N-formylmethionyl-tRNA by promoting its recognition by IF2 and preventing the misappropriation of this tRNA by the elongation apparatus. This is Methionyl-tRNA formyltransferase from Lacticaseibacillus casei (strain BL23) (Lactobacillus casei).